The primary structure comprises 215 residues: Small ribosomal subunit protein uS3 (215 aa).

Residues 39–107 (VRQYLQKKLA…PVHINIEEIR (69 aa)) enclose the KH type-2 domain.

This sequence belongs to the universal ribosomal protein uS3 family. Part of the 30S ribosomal subunit. Forms a tight complex with proteins S10 and S14.

Its function is as follows. Binds the lower part of the 30S subunit head. Binds mRNA in the 70S ribosome, positioning it for translation. The polypeptide is Small ribosomal subunit protein uS3 (Nitrosomonas europaea (strain ATCC 19718 / CIP 103999 / KCTC 2705 / NBRC 14298)).